Consider the following 546-residue polypeptide: Calcitonin receptor-like protein 1 (546 aa).

The Cytoplasmic segment spans residues 1-171 (MADATSPFNV…EVARNARKLE (171 aa)). Residues 172 to 192 (FVGLGLSLVSLILAISIFSYF) form a helical membrane-spanning segment. The Extracellular portion of the chain corresponds to 193–205 (RRLRVFRNLLHLH). Residues 206-226 (LMIAMLMVVILRLVLYIDLIF) traverse the membrane as a helical segment. The Cytoplasmic segment spans residues 227–251 (TGENGPHTNSAEGKTINTMPIVCEG). Residues 252-272 (MFFFLEYFKTVTFCWMFLEGI) form a helical membrane-spanning segment. At 273–292 (YLNNQIVFGFFNSEPKLLPY) the chain is on the extracellular side. Residues 293–313 (FIAGYGIPLVHTMLWLLVVLI) form a helical membrane-spanning segment. The Cytoplasmic portion of the chain corresponds to 314–333 (KKDFKVERCLGSYYLEPEFW). The chain crosses the membrane as a helical span at residues 334–354 (ILDGPRMAELVINLFFICNVI). The Extracellular portion of the chain corresponds to 355–377 (RVLYSKVRESNNTSEAGLKKSVK). Asn-365 and Asn-366 each carry an N-linked (GlcNAc...) asparagine glycan. A helical transmembrane segment spans residues 378–398 (AAMMLLPLLGVPNIMQTIPFA). Over 399–403 (PTRDN) the chain is Cytoplasmic. The chain crosses the membrane as a helical span at residues 404 to 424 (IMVFAVWTYTASFTYMYQGLM). The Extracellular portion of the chain corresponds to 425–546 (VASIYCFTNK…EGSNRSTKSP (122 aa)). Asn-472 and Asn-476 each carry an N-linked (GlcNAc...) asparagine glycan. A disordered region spans residues 472 to 546 (NGTANASAPQ…EGSNRSTKSP (75 aa)). A compositionally biased stretch (polar residues) spans 473-485 (GTANASAPQTNNA). Basic and acidic residues predominate over residues 500 to 520 (KGSDDSTTKLMKDAVMEEEKN). An N-linked (GlcNAc...) asparagine glycan is attached at Asn-540.

The protein belongs to the G-protein coupled receptor 2 family. Expression was observed in the mechanosensory neuron pairs PLM, ALM, FLP, OLQD, and OLQV, the chemosensory neurons PHA, PHB, RMEV, the ring motor neurons RMED, and the pharyngeal interneuron pair I1. Expression in sensory neurons PHA, PQR and URY are responsible for mate searching behavior. Expressed in AIY, RIM, RIA, and other neurons.

It is found in the cell membrane. G-protein coupled receptor for PDF neuropeptides. Plays a role in responses to environmental signals, including chemicals and touch, and in modulating locomotory behaviors. Capable of transducing signals via an adenylate cyclase acy-1 cAMP-dependent pathway. Required to regulate the sex-specific expression of TGFbeta-like daf-7 in the ASJ chemosensory neurons, perhaps acting via acy-1. Involved in modulating mate searching behavior independent of nutritional status. In the presence of food, plays a role in initiating and extending exploratory roaming behavior, perhaps acting in AIY, RIM, RIA, and other neurons, in opposition to 5-hydroxytryptamine (serotonin) signaling. Involved in mediating arousal from the sleep-like state called lethargus, which occurs during molting between larval and adult stages, in part by regulating touch sensitivity. May play a role in circadian rhythms of locomotor activity. In terms of biological role, G-protein coupled receptor which is activated by neuropeptides PDF-1 and PDF-2. Probably acts through the G-alpha(s) type of G proteins to elevate cAMP levels. Its function is as follows. G-protein coupled receptor which is activated by neuropeptides PDF-1 and PDF-2; however, activation is lower compared to isoforms a and b. Probably inhibits cAMP levels through the G-alpha(i/o) type of G proteins. This Caenorhabditis elegans protein is Calcitonin receptor-like protein 1 (pdfr-1).